We begin with the raw amino-acid sequence, 385 residues long: MSTTTTMRAWTYMQSGLPSQTIVLDDEAPSPSAAELGPDELLIAVNYVAMNSGFTTLMRSLPPQPYSLPHIYNRQKRLGVPEFEFSGRILAVGSAIPSTRPDLQPSTLVLGCCAAKRVFIEGKGALAERVIAPAAQLIPLRPLSTVTTQDDESPGPDPAAPPISLLEASGLSACGCTAVQVLDLTKLVAGDKLFVNGGSTSVGMLTIQVARQVLGQTGTIIASGTDTTLIRSVGADDVIDYTAQRPLHEFLRTHHADRPFDAIIDCVGVAELYTHCEPYLAPGKLFINLGAMTAKPTFWGLLSFVWNQHMAPLWPVVLGGVPRSYQFYSARPNRETLGRVMRLVERGELRMVVDSVWEMRDAKMAYKRMESKRAKGKIIVRVQEE.

64–67 (QPYS) is an NADP(+) binding site. Substrate is bound at residue 156 to 163 (PDPAAPPI). NADP(+) is bound by residues 199-202 (STSV), 223-226 (SGTD), Tyr-241, and 289-290 (LG). 309 to 313 (HMAPL) is a substrate binding site. An NADP(+)-binding site is contributed by 372 to 373 (KR).

The protein belongs to the zinc-containing alcohol dehydrogenase family. In terms of assembly, monomer.

It functions in the pathway secondary metabolite biosynthesis. Trans-enoyl reductase; part of the gene cluster that mediates the biosynthesis of oxaleimides, cytotoxic compounds containing an unusual disubstituted succinimide moiety. The first step of the pathway is provided by the HR-PKS poxF that serves in a new mode of collaborative biosynthesis with the PKS-NRPS poxE, by providing the olefin containing amino acid substrate via the synthesis of an ACP-bound dec-4-enoate. The cytochrome P450 monooxygenase poxM-catalyzed oxidation at the alpha-position creates the enzyme-bound 2-hydroxydec-4-enoyl-ACP thioester, which may be prone to spontaneous hydrolysis to yield 2-hydroxydec-4-enoic acid due to increased electrophilicity of the carbonyl. 2-hydroxydec-4-enoic acid can then be further oxidized by poxM to yield the alpha-ketoacid 2-oxodec-4-enoicacid, which is reductively aminated by the aminotransferase poxL to yield (S,E)-2-aminodec-4-enoic acid. The Hybrid PKS-NRPS synthetase poxE then performs condensation between the octaketide product of its PKS modules and the amino group of (S,E)-2-aminodec-4-enoic acid which is activated and incorporated by the adenylation domain. The resulting aminoacyl product can be cyclized by the Diels-Alderase PoxQ and reductively released by the reductive (R) domain of poxE to yield an aldehyde intermediate. The released aldehyde is then substrate for a Knoevenagel condensation by the hydrolyase poxO followed by an oxidation at the 5-position of the pyrrolidone ring. The presence of the olefin from the amino acid building block allows for migration of the substituted allyl group to occur. This allylic transposition reaction takes place in a conjugate addition, semipinacol-like fashion to yield a succinimide intermediate. Iterative two-electron oxidations of the C7 methyl of the succinimide intermediate to the carboxylic acid can be catalyzed by one of two remaining cytochrome P450 monooxygenasess poxC or poxD to yield oxaleimide A. Subsequent oxidation yields the maleimide scaffold oxaleimide I. Both oxaleimide A and oxaleimide I can undergo oxidative modifications in the decalin ring to yield the series of products oxaleimides B to H. The polypeptide is Trans-enoyl reductase poxH (Penicillium oxalicum).